Consider the following 156-residue polypeptide: Small ribosomal subunit protein uS7 (156 aa).

The protein belongs to the universal ribosomal protein uS7 family. As to quaternary structure, part of the 30S ribosomal subunit. Contacts proteins S9 and S11.

Its function is as follows. One of the primary rRNA binding proteins, it binds directly to 16S rRNA where it nucleates assembly of the head domain of the 30S subunit. Is located at the subunit interface close to the decoding center, probably blocks exit of the E-site tRNA. The protein is Small ribosomal subunit protein uS7 of Campylobacter fetus subsp. fetus (strain 82-40).